Reading from the N-terminus, the 485-residue chain is UDP-N-acetylmuramoyl-L-alanyl-D-glutamate--2,6-diaminopimelate ligase (485 aa).

Residue Ser-32 coordinates UDP-N-acetyl-alpha-D-muramoyl-L-alanyl-D-glutamate. 111 to 117 (GTNGKTT) is an ATP binding site. Residues 153 to 154 (TT), Ser-180, and Arg-188 contribute to the UDP-N-acetyl-alpha-D-muramoyl-L-alanyl-D-glutamate site. Position 220 is an N6-carboxylysine (Lys-220). Meso-2,6-diaminopimelate contacts are provided by residues Arg-382, 405 to 408 (DNPR), Gly-455, and Glu-459. The Meso-diaminopimelate recognition motif motif lies at 405–408 (DNPR).

Belongs to the MurCDEF family. MurE subfamily. Requires Mg(2+) as cofactor. In terms of processing, carboxylation is probably crucial for Mg(2+) binding and, consequently, for the gamma-phosphate positioning of ATP.

Its subcellular location is the cytoplasm. The enzyme catalyses UDP-N-acetyl-alpha-D-muramoyl-L-alanyl-D-glutamate + meso-2,6-diaminopimelate + ATP = UDP-N-acetyl-alpha-D-muramoyl-L-alanyl-gamma-D-glutamyl-meso-2,6-diaminopimelate + ADP + phosphate + H(+). The protein operates within cell wall biogenesis; peptidoglycan biosynthesis. In terms of biological role, catalyzes the addition of meso-diaminopimelic acid to the nucleotide precursor UDP-N-acetylmuramoyl-L-alanyl-D-glutamate (UMAG) in the biosynthesis of bacterial cell-wall peptidoglycan. The sequence is that of UDP-N-acetylmuramoyl-L-alanyl-D-glutamate--2,6-diaminopimelate ligase from Chlamydia felis (strain Fe/C-56) (Chlamydophila felis).